The following is a 445-amino-acid chain: Gastrula zinc finger protein 5-1 (445 aa).

The interval 1-38 (MLQIKTEKEELDCGDDQNPKESSAVPLTDGASPEPQPQ) is disordered. Phosphoserine; by CK2 is present on Ser-89. The C2H2-type 1; atypical zinc-finger motif lies at 185 to 210 (FICCKCGDSFAHHSDLHTHLYACAGH). 7 C2H2-type zinc fingers span residues 239-261 (FKCT…HRIH), 267-289 (FTCT…SRTH), 295-317 (YVCT…MRTH), 323-345 (YACK…QNSH), 351-373 (FICT…QRTH), 379-401 (FICS…QMIH), and 407-429 (FSCS…QRVH).

Binds to RNA homomers. In Xenopus laevis (African clawed frog), this protein is Gastrula zinc finger protein 5-1.